A 337-amino-acid chain; its full sequence is uncharacterized protein (337 aa).

Positions 291-314 (NKTRQCSNTKTTTKSTMTPINNGF) are disordered. Positions 299-308 (TKTTTKSTMT) are enriched in low complexity.

This is an uncharacterized protein from Acanthamoeba polyphaga mimivirus (APMV).